We begin with the raw amino-acid sequence, 671 residues long: Oviduct-specific glycoprotein (671 aa).

A signal peptide spans 1 to 21 (MGRLLLWVGLVLLMKPNDGTA). The 364-residue stretch at 22–385 (YKLVCYFTNW…HILNELLVRA (364 aa)) folds into the GH18 domain. An intrachain disulfide couples Cys26 to Cys51. Residues 71-72 (LQ), 98-101 (GGWN), Tyr142, 211-214 (LSYD), and Trp355 contribute to the chitin site. The N-linked (GlcNAc...) asparagine glycan is linked to Asn402. 8 repeat units span residues 490 to 504 (TGMT…AGRE), 505 to 519 (TMTT…PGGE), 520 to 534 (TMTT…PGGE), 535 to 549 (TVTT…PGGE), 550 to 564 (TMTT…PGGE), 565 to 579 (TVTI…PVGE), 580 to 594 (TVTI…PGGQ), and 595 to 609 (TTAT…PPGM). Residues 490 to 609 (TGMTVTVQTQ…GSQSVTPPGM (120 aa)) are 8 X 15 AA tandem repeats. Residues Asn511, Asn526, Asn541, Asn556, Asn571, and Asn586 are each glycosylated (N-linked (GlcNAc...) asparagine).

It belongs to the glycosyl hydrolase 18 family. Post-translationally, highly O-glycosylated and also N-glycosylated. As to expression, oviduct.

It is found in the cytoplasmic vesicle. It localises to the secretory vesicle. Binds to oocyte zona pellucida in vivo. May play a role in the fertilization process and/or early embryonic development. Might act as a protective secretion influencing the first steps of the reproductive process necessary for the normal triggering of fertilization and early embryonic development. This Mesocricetus auratus (Golden hamster) protein is Oviduct-specific glycoprotein (OVGP1).